Reading from the N-terminus, the 269-residue chain is RBPJ-interacting and tubulin-associated protein 1 (269 aa).

The Nuclear export signal signature appears at V5–L17. Disordered regions lie at residues S37–R101 and F141–K269. Positions R62–N77 are enriched in polar residues. Residues S79 to T93 show a composition bias toward low complexity. The short motif at L92–S108 is the Nuclear localization signal element. Residues W128 to P156 form an interaction with RBPJ/RBPSUH region. Residues P156–K269 form an interaction with tubulin region.

This sequence belongs to the RITA family. As to quaternary structure, interacts with RBPJ/RBPSUH.

The protein localises to the cytoplasm. It is found in the nucleus. The protein resides in the cytoskeleton. It localises to the microtubule organizing center. Its subcellular location is the centrosome. Tubulin-binding protein that acts as a negative regulator of Notch signaling pathway. Shuttles between the cytoplasm and the nucleus and mediates the nuclear export of RBPJ/RBPSUH, thereby preventing the interaction between RBPJ/RBPSUH and NICD product of Notch proteins (Notch intracellular domain), leading to down-regulate Notch-mediated transcription. May play a role in neurogenesis. The chain is RBPJ-interacting and tubulin-associated protein 1 (RITA1) from Ailuropoda melanoleuca (Giant panda).